Reading from the N-terminus, the 137-residue chain is uncharacterized protein (137 aa).

A run of 4 helical transmembrane segments spans residues 20–39 (YGKI…GYAV), 44–61 (WFIT…LSLV), 86–105 (VEIF…ALDL), and 109–131 (AALA…YGYY).

The protein localises to the cell membrane. This is an uncharacterized protein from Archaeoglobus fulgidus (strain ATCC 49558 / DSM 4304 / JCM 9628 / NBRC 100126 / VC-16).